The following is a 166-amino-acid chain: Small ribosomal subunit protein uS5 (166 aa).

In terms of domain architecture, S5 DRBM spans 11–74; the sequence is LQEKLIAVNR…EQAKRNLNKV (64 aa).

This sequence belongs to the universal ribosomal protein uS5 family. As to quaternary structure, part of the 30S ribosomal subunit. Contacts proteins S4 and S8.

With S4 and S12 plays an important role in translational accuracy. In terms of biological role, located at the back of the 30S subunit body where it stabilizes the conformation of the head with respect to the body. This is Small ribosomal subunit protein uS5 from Aeromonas hydrophila subsp. hydrophila (strain ATCC 7966 / DSM 30187 / BCRC 13018 / CCUG 14551 / JCM 1027 / KCTC 2358 / NCIMB 9240 / NCTC 8049).